The primary structure comprises 116 residues: Large ribosomal subunit protein uL23 (116 aa).

This sequence belongs to the universal ribosomal protein uL23 family. Part of the 50S ribosomal subunit. Contacts protein L29, and trigger factor when it is bound to the ribosome.

In terms of biological role, one of the early assembly proteins it binds 23S rRNA. One of the proteins that surrounds the polypeptide exit tunnel on the outside of the ribosome. Forms the main docking site for trigger factor binding to the ribosome. The polypeptide is Large ribosomal subunit protein uL23 (Psychrobacter sp. (strain PRwf-1)).